The chain runs to 683 residues: 1,4-alpha-glucan-branching enzyme (683 aa).

Positions 92 and 127 each coordinate (1,4-alpha-D-glucosyl)n. D342 (nucleophile) is an active-site residue. Catalysis depends on E397, which acts as the Proton donor.

Belongs to the glycosyl hydrolase 13 family. GlgB subfamily.

Its subcellular location is the cytoplasm. The catalysed reaction is Transfers a segment of a (1-&gt;4)-alpha-D-glucan chain to a primary hydroxy group in a similar glucan chain.. It functions in the pathway glycan biosynthesis; glycogen biosynthesis. In terms of biological role, glycogen-branching enzyme participates in the glycogen biosynthetic process along with glycogenin and glycogen synthase. Generates alpha-1,6-glucosidic branches from alpha-1,4-linked glucose chains, to increase solubility of the glycogen polymer. In Rhizophagus irregularis (strain DAOM 181602 / DAOM 197198 / MUCL 43194) (Arbuscular mycorrhizal fungus), this protein is 1,4-alpha-glucan-branching enzyme (GLC3).